A 184-amino-acid polypeptide reads, in one-letter code: Ribosome-recycling factor (184 aa).

Belongs to the RRF family.

It localises to the cytoplasm. Responsible for the release of ribosomes from messenger RNA at the termination of protein biosynthesis. May increase the efficiency of translation by recycling ribosomes from one round of translation to another. The chain is Ribosome-recycling factor from Thermoanaerobacter pseudethanolicus (strain ATCC 33223 / 39E) (Clostridium thermohydrosulfuricum).